The following is a 158-amino-acid chain: Glutathione peroxidase homolog BsaA (158 aa).

C36 is an active-site residue.

This sequence belongs to the glutathione peroxidase family.

The protein is Glutathione peroxidase homolog BsaA (bsaA) of Staphylococcus aureus (strain COL).